Here is a 302-residue protein sequence, read N- to C-terminus: Aspartate carbamoyltransferase catalytic subunit (302 aa).

Carbamoyl phosphate-binding residues include Arg53 and Thr54. Lys82 provides a ligand contact to L-aspartate. Carbamoyl phosphate-binding residues include Arg103, His131, and Gln134. 2 residues coordinate L-aspartate: Arg164 and Arg223. Carbamoyl phosphate contacts are provided by Leu260 and Pro261.

This sequence belongs to the aspartate/ornithine carbamoyltransferase superfamily. ATCase family. In terms of assembly, heterooligomer of catalytic and regulatory chains.

It carries out the reaction carbamoyl phosphate + L-aspartate = N-carbamoyl-L-aspartate + phosphate + H(+). It functions in the pathway pyrimidine metabolism; UMP biosynthesis via de novo pathway; (S)-dihydroorotate from bicarbonate: step 2/3. In terms of biological role, catalyzes the condensation of carbamoyl phosphate and aspartate to form carbamoyl aspartate and inorganic phosphate, the committed step in the de novo pyrimidine nucleotide biosynthesis pathway. In Methanococcus vannielii (strain ATCC 35089 / DSM 1224 / JCM 13029 / OCM 148 / SB), this protein is Aspartate carbamoyltransferase catalytic subunit.